Reading from the N-terminus, the 188-residue chain is Kininogen (188 aa).

N-linked (GlcNAc...) asparagine glycans are attached at residues Asn36, Asn150, and Asn182.

Bradykinin is released from kininogen by kallikrein. Post-translationally, N-glycosylated. Contains O-acetylated sialic acids as terminal elements on biantennary and triantennary N-glycans.

In terms of biological role, inhibits papain and ficin (cysteine proteinases) but not trypsin (a serine proteinase). The polypeptide is Kininogen (Anarhichas minor (Arctic spotted wolffish)).